Reading from the N-terminus, the 471-residue chain is Glutamate--tRNA ligase (471 aa).

The 'HIGH' region motif lies at 9–19 (PSPTGYLHVGG). Zn(2+) is bound by residues Cys98, Cys100, Cys125, and Asp127. The 'KMSKS' region signature appears at 237–241 (KLSKR). Lys240 is an ATP binding site.

This sequence belongs to the class-I aminoacyl-tRNA synthetase family. Glutamate--tRNA ligase type 1 subfamily. As to quaternary structure, monomer. Zn(2+) serves as cofactor.

The protein resides in the cytoplasm. It carries out the reaction tRNA(Glu) + L-glutamate + ATP = L-glutamyl-tRNA(Glu) + AMP + diphosphate. In terms of biological role, catalyzes the attachment of glutamate to tRNA(Glu) in a two-step reaction: glutamate is first activated by ATP to form Glu-AMP and then transferred to the acceptor end of tRNA(Glu). In Yersinia pseudotuberculosis serotype O:1b (strain IP 31758), this protein is Glutamate--tRNA ligase.